Consider the following 67-residue polypeptide: MERIILRKGKSIREAMEEQGVLEKFLKNRPKIDPAAKYHFNNDAVAYEPFTNYLDSFYFGEISIGTP.

Positions 1-43 are cleaved as a propeptide — activation peptide; the sequence is MERIILRKGKSIREAMEEQGVLEKFLKNRPKIDPAAKYHFNND.

This sequence belongs to the peptidase A1 family.

Its subcellular location is the secreted. It carries out the reaction Degradation of gelatin, little activity on hemoglobin. Specificity on B chain of insulin more restricted than that of pepsin A. Does not cleave 1-Phe-|-Val-2, 4-Gln-|-His-5 or 23-Gly-|-Phe-24.. In Sus scrofa (Pig), this protein is Pepsin B (PGB).